The sequence spans 145 residues: D-aminoacyl-tRNA deacylase (145 aa).

Residues 137–138 (GP) carry the Gly-cisPro motif, important for rejection of L-amino acids motif.

It belongs to the DTD family. Homodimer.

The protein resides in the cytoplasm. It carries out the reaction glycyl-tRNA(Ala) + H2O = tRNA(Ala) + glycine + H(+). The catalysed reaction is a D-aminoacyl-tRNA + H2O = a tRNA + a D-alpha-amino acid + H(+). Its function is as follows. An aminoacyl-tRNA editing enzyme that deacylates mischarged D-aminoacyl-tRNAs. Also deacylates mischarged glycyl-tRNA(Ala), protecting cells against glycine mischarging by AlaRS. Acts via tRNA-based rather than protein-based catalysis; rejects L-amino acids rather than detecting D-amino acids in the active site. By recycling D-aminoacyl-tRNA to D-amino acids and free tRNA molecules, this enzyme counteracts the toxicity associated with the formation of D-aminoacyl-tRNA entities in vivo and helps enforce protein L-homochirality. This Alcanivorax borkumensis (strain ATCC 700651 / DSM 11573 / NCIMB 13689 / SK2) protein is D-aminoacyl-tRNA deacylase.